Consider the following 227-residue polypeptide: Deoxyribose-phosphate aldolase (227 aa).

Residue D84 is the Proton donor/acceptor of the active site. K146 functions as the Schiff-base intermediate with acetaldehyde in the catalytic mechanism. K188 (proton donor/acceptor) is an active-site residue.

The protein belongs to the DeoC/FbaB aldolase family. DeoC type 1 subfamily.

It is found in the cytoplasm. The catalysed reaction is 2-deoxy-D-ribose 5-phosphate = D-glyceraldehyde 3-phosphate + acetaldehyde. The protein operates within carbohydrate degradation; 2-deoxy-D-ribose 1-phosphate degradation; D-glyceraldehyde 3-phosphate and acetaldehyde from 2-deoxy-alpha-D-ribose 1-phosphate: step 2/2. In terms of biological role, catalyzes a reversible aldol reaction between acetaldehyde and D-glyceraldehyde 3-phosphate to generate 2-deoxy-D-ribose 5-phosphate. This Pyrobaculum islandicum (strain DSM 4184 / JCM 9189 / GEO3) protein is Deoxyribose-phosphate aldolase.